A 437-amino-acid chain; its full sequence is Nicotinate phosphoribosyltransferase (437 aa).

H231 bears the Phosphohistidine; by autocatalysis mark.

Belongs to the NAPRTase family. Transiently phosphorylated on a His residue during the reaction cycle. Phosphorylation strongly increases the affinity for substrates and increases the rate of nicotinate D-ribonucleotide production. Dephosphorylation regenerates the low-affinity form of the enzyme, leading to product release.

The catalysed reaction is nicotinate + 5-phospho-alpha-D-ribose 1-diphosphate + ATP + H2O = nicotinate beta-D-ribonucleotide + ADP + phosphate + diphosphate. It functions in the pathway cofactor biosynthesis; NAD(+) biosynthesis; nicotinate D-ribonucleotide from nicotinate: step 1/1. Functionally, catalyzes the synthesis of beta-nicotinate D-ribonucleotide from nicotinate and 5-phospho-D-ribose 1-phosphate at the expense of ATP. This chain is Nicotinate phosphoribosyltransferase, found in Vibrio vulnificus (strain YJ016).